Consider the following 459-residue polypeptide: Argininosuccinate lyase (459 aa).

This sequence belongs to the lyase 1 family. Argininosuccinate lyase subfamily.

The protein resides in the cytoplasm. The catalysed reaction is 2-(N(omega)-L-arginino)succinate = fumarate + L-arginine. It functions in the pathway amino-acid biosynthesis; L-arginine biosynthesis; L-arginine from L-ornithine and carbamoyl phosphate: step 3/3. The chain is Argininosuccinate lyase from Staphylococcus aureus (strain MRSA252).